Consider the following 186-residue polypeptide: Probable nicotinate-nucleotide adenylyltransferase (186 aa).

It belongs to the NadD family.

It catalyses the reaction nicotinate beta-D-ribonucleotide + ATP + H(+) = deamido-NAD(+) + diphosphate. The protein operates within cofactor biosynthesis; NAD(+) biosynthesis; deamido-NAD(+) from nicotinate D-ribonucleotide: step 1/1. Functionally, catalyzes the reversible adenylation of nicotinate mononucleotide (NaMN) to nicotinic acid adenine dinucleotide (NaAD). The polypeptide is Probable nicotinate-nucleotide adenylyltransferase (Tropheryma whipplei (strain Twist) (Whipple's bacillus)).